The sequence spans 110 residues: Phosphoribosyl-ATP pyrophosphatase (110 aa).

This sequence belongs to the PRA-PH family.

The protein resides in the cytoplasm. The enzyme catalyses 1-(5-phospho-beta-D-ribosyl)-ATP + H2O = 1-(5-phospho-beta-D-ribosyl)-5'-AMP + diphosphate + H(+). Its pathway is amino-acid biosynthesis; L-histidine biosynthesis; L-histidine from 5-phospho-alpha-D-ribose 1-diphosphate: step 2/9. The chain is Phosphoribosyl-ATP pyrophosphatase from Pseudomonas fluorescens (strain Pf0-1).